Reading from the N-terminus, the 366-residue chain is Chorismate synthase (366 aa).

Residues Arg-48 and Arg-54 each coordinate NADP(+). FMN contacts are provided by residues 125-127, 238-239, Gly-278, 293-297, and Arg-319; these read RSS, NA, and KPTSS.

This sequence belongs to the chorismate synthase family. As to quaternary structure, homotetramer. FMNH2 is required as a cofactor.

The enzyme catalyses 5-O-(1-carboxyvinyl)-3-phosphoshikimate = chorismate + phosphate. The protein operates within metabolic intermediate biosynthesis; chorismate biosynthesis; chorismate from D-erythrose 4-phosphate and phosphoenolpyruvate: step 7/7. Its function is as follows. Catalyzes the anti-1,4-elimination of the C-3 phosphate and the C-6 proR hydrogen from 5-enolpyruvylshikimate-3-phosphate (EPSP) to yield chorismate, which is the branch point compound that serves as the starting substrate for the three terminal pathways of aromatic amino acid biosynthesis. This reaction introduces a second double bond into the aromatic ring system. This Paraburkholderia phytofirmans (strain DSM 17436 / LMG 22146 / PsJN) (Burkholderia phytofirmans) protein is Chorismate synthase.